Reading from the N-terminus, the 398-residue chain is Tyrosine--tRNA ligase (398 aa).

Residues 48–57 (PTGADIHLGH) carry the 'HIGH' region motif. The 'KMSKS' region signature appears at 235–239 (KMSKS). Residue Lys-238 coordinates ATP. The 65-residue stretch at 334 to 398 (VKLAYLLGAT…GKNKFMRLVP (65 aa)) folds into the S4 RNA-binding domain.

The protein belongs to the class-I aminoacyl-tRNA synthetase family. TyrS type 2 subfamily. In terms of assembly, homodimer.

It is found in the cytoplasm. It carries out the reaction tRNA(Tyr) + L-tyrosine + ATP = L-tyrosyl-tRNA(Tyr) + AMP + diphosphate + H(+). Functionally, catalyzes the attachment of tyrosine to tRNA(Tyr) in a two-step reaction: tyrosine is first activated by ATP to form Tyr-AMP and then transferred to the acceptor end of tRNA(Tyr). The protein is Tyrosine--tRNA ligase of Nostoc sp. (strain PCC 7120 / SAG 25.82 / UTEX 2576).